The sequence spans 184 residues: Ribose 1,5-bisphosphate phosphokinase PhnN (184 aa).

11-18 (GPSGAGKD) serves as a coordination point for ATP.

The protein belongs to the ribose 1,5-bisphosphokinase family.

The catalysed reaction is alpha-D-ribose 1,5-bisphosphate + ATP = 5-phospho-alpha-D-ribose 1-diphosphate + ADP. It functions in the pathway metabolic intermediate biosynthesis; 5-phospho-alpha-D-ribose 1-diphosphate biosynthesis; 5-phospho-alpha-D-ribose 1-diphosphate from D-ribose 5-phosphate (route II): step 3/3. Its function is as follows. Catalyzes the phosphorylation of ribose 1,5-bisphosphate to 5-phospho-D-ribosyl alpha-1-diphosphate (PRPP). The polypeptide is Ribose 1,5-bisphosphate phosphokinase PhnN (Burkholderia pseudomallei (strain K96243)).